The sequence spans 228 residues: Cytidylate kinase (228 aa).

10–18 (GPSGSGKGT) serves as a coordination point for ATP.

This sequence belongs to the cytidylate kinase family. Type 1 subfamily.

It localises to the cytoplasm. The catalysed reaction is CMP + ATP = CDP + ADP. It catalyses the reaction dCMP + ATP = dCDP + ADP. The protein is Cytidylate kinase of Acinetobacter baumannii (strain SDF).